The primary structure comprises 242 residues: Synaptonemal complex central element protein 1-like (242 aa).

A disordered region spans residues 1–24; it reads MAGKLKPLNVEAPEATEEAEGQAK. Positions 44-181 form a coiled coil; it reads LEPQIEDLIS…LREVERRLHS (138 aa). Residues 206–242 form a disordered region; sequence VRSAPEVGAGEGEAGPELPRARDEEDPEPPVAAPDAL.

The protein belongs to the SYCE family.

May be involved in meiosis. The chain is Synaptonemal complex central element protein 1-like (SYCE1L) from Homo sapiens (Human).